Reading from the N-terminus, the 278-residue chain is Probable ribosomal RNA small subunit methyltransferase A (278 aa).

S-adenosyl-L-methionine-binding residues include Asn-23, Leu-25, Gly-50, Glu-71, Asp-95, and Asn-110.

The protein belongs to the class I-like SAM-binding methyltransferase superfamily. rRNA adenine N(6)-methyltransferase family. RsmA subfamily.

The protein resides in the cytoplasm. Specifically dimethylates two adjacent adenosines in the loop of a conserved hairpin near the 3'-end of 16S rRNA in the 30S particle. May play a critical role in biogenesis of 30S subunits. The polypeptide is Probable ribosomal RNA small subunit methyltransferase A (Thermococcus gammatolerans (strain DSM 15229 / JCM 11827 / EJ3)).